Here is a 141-residue protein sequence, read N- to C-terminus: Perlwapin-like protein (141 aa).

Positions 1-19 (MNVYFILFLGVFAFIEVNC) are cleaved as a signal peptide. The WAP domain occupies 23 to 71 (KSKSLGTCPKLDVSTVCVVDYKFNCLFQKQCPSGYRCCTYGCNRRCAAV). 6 cysteine pairs are disulfide-bonded: Cys30–Cys60, Cys39–Cys64, Cys47–Cys59, Cys53–Cys68, Cys81–Cys105, and Cys92–Cys104.

Component of the organic matrix of calcified shell layers like nacre and prisms.

The protein resides in the secreted. The sequence is that of Perlwapin-like protein from Mytilus galloprovincialis (Mediterranean mussel).